Consider the following 432-residue polypeptide: MNIKTDGWSKKAHIVVAVSTGIDSMSLLYSLLNDYQHTYRKLTCVHVNHGLREQSYEEEAFLREYCHQHHIDIYIKRLDLSDIVADGNSIQQEARQRRYEWFGDIIAQLRADVLLTAHHLDDQFETIIYRLFTGRSTRNSLGMTYESYFNQYKVYRPMLNLKKTEILAYQYANQIPYYEDMSNQDRKYVRNDIRQRIIPAINENPHLNAHQLLKLKDWHDIELQSLKEQAETFINNEVSKSKYLTYSFSRTAFNELNVNIKSVVMDLLFEKLDCHLAMPQHAYDEWFEQIRNDKSQFNIHVTDEWIIQIAYDKLIIMAKSEMDQYILDRICIRKPGTYEFNDYQIDIHPDLPQQLYPLTVRVRQNGDVYKLNGQKGHKKVSRLFIDKKVTLAERQRIPLIINQENAVLAIGDLYVKENFKEFILISNNGDEL.

19-24 is a binding site for ATP; it reads STGIDS.

This sequence belongs to the tRNA(Ile)-lysidine synthase family.

It localises to the cytoplasm. It catalyses the reaction cytidine(34) in tRNA(Ile2) + L-lysine + ATP = lysidine(34) in tRNA(Ile2) + AMP + diphosphate + H(+). In terms of biological role, ligates lysine onto the cytidine present at position 34 of the AUA codon-specific tRNA(Ile) that contains the anticodon CAU, in an ATP-dependent manner. Cytidine is converted to lysidine, thus changing the amino acid specificity of the tRNA from methionine to isoleucine. The chain is tRNA(Ile)-lysidine synthase from Staphylococcus epidermidis (strain ATCC 35984 / DSM 28319 / BCRC 17069 / CCUG 31568 / BM 3577 / RP62A).